The chain runs to 165 residues: Mediator of RNA polymerase II transcription subunit 10 (165 aa).

Disordered stretches follow at residues Ser-54–Leu-81 and Leu-143–Gly-165. Residues Thr-62 to Asn-77 show a composition bias toward polar residues.

It belongs to the Mediator complex subunit 10 family. In terms of assembly, component of the Mediator complex.

The protein localises to the nucleus. In terms of biological role, component of the Mediator complex, a coactivator involved in the regulated transcription of nearly all RNA polymerase II-dependent genes. Mediator functions as a bridge to convey information from gene-specific regulatory proteins to the basal RNA polymerase II transcription machinery. Mediator is recruited to promoters by direct interactions with regulatory proteins and serves as a scaffold for the assembly of a functional preinitiation complex with RNA polymerase II and the general transcription factors. This chain is Mediator of RNA polymerase II transcription subunit 10 (nut2), found in Emericella nidulans (strain FGSC A4 / ATCC 38163 / CBS 112.46 / NRRL 194 / M139) (Aspergillus nidulans).